The primary structure comprises 631 residues: Phosphomethylpyrimidine synthase (631 aa).

Substrate contacts are provided by residues Asn239, Met268, Tyr297, His333, 353–355, 394–397, and Glu433; these read SRG and DGLR. Residue His437 coordinates Zn(2+). Position 460 (Tyr460) interacts with substrate. Zn(2+) is bound at residue His501. Residues Cys581, Cys584, and Cys589 each coordinate [4Fe-4S] cluster.

This sequence belongs to the ThiC family. Homodimer. Requires [4Fe-4S] cluster as cofactor.

The catalysed reaction is 5-amino-1-(5-phospho-beta-D-ribosyl)imidazole + S-adenosyl-L-methionine = 4-amino-2-methyl-5-(phosphooxymethyl)pyrimidine + CO + 5'-deoxyadenosine + formate + L-methionine + 3 H(+). It functions in the pathway cofactor biosynthesis; thiamine diphosphate biosynthesis. In terms of biological role, catalyzes the synthesis of the hydroxymethylpyrimidine phosphate (HMP-P) moiety of thiamine from aminoimidazole ribotide (AIR) in a radical S-adenosyl-L-methionine (SAM)-dependent reaction. This is Phosphomethylpyrimidine synthase from Klebsiella pneumoniae (strain 342).